A 307-amino-acid chain; its full sequence is Serine/threonine-protein phosphatase 4 catalytic subunit (307 aa).

Ala2 bears the N-acetylalanine mark. 4 residues coordinate Mn(2+): Asp54, His56, Asp82, and Asn114. The active-site Proton donor is His115. Residues His164 and His238 each contribute to the Mn(2+) site. At Leu307 the chain carries Leucine methyl ester.

It belongs to the PPP phosphatase family. PP-4 (PP-X) subfamily. In terms of assembly, serine/threonine-protein phosphatase 4 (PP4) occurs in different assemblies of the catalytic and one or more regulatory subunits. Component of the PP4 complexes PPP4C-PPP4R1, PPP4C-PPP4R2, PPP4C-PPP4R2-PPP4R3A, PPP4C-PPP4R2-PPP4R3B and PPP4C-PPP4R4. The PPP4C-PPP4R2 complex appears to be a tetramer composed of 2 molecules of PPP4C and 2 molecules of PPP4R2. Interacts with REL, NFKB1/p50 and RELA. Interacts with SMN1 and GEMIN4. Interacts with IRS4 (phosphorylated). Interacts with SMEK1/PPP4R3A; the interaction requires PP4R2. Interacts with HDAC3. Mn(2+) is required as a cofactor. Methylation at the C-terminal Leu-307 is critical for interactions with regulatory subunits and functions in DNA repair.

It is found in the cytoplasm. Its subcellular location is the nucleus. It localises to the cytoskeleton. The protein resides in the microtubule organizing center. The protein localises to the centrosome. The enzyme catalyses O-phospho-L-seryl-[protein] + H2O = L-seryl-[protein] + phosphate. The catalysed reaction is O-phospho-L-threonyl-[protein] + H2O = L-threonyl-[protein] + phosphate. In terms of biological role, protein phosphatase that is involved in many processes such as microtubule organization at centrosomes, maturation of spliceosomal snRNPs, apoptosis, DNA repair, tumor necrosis factor (TNF)-alpha signaling, activation of c-Jun N-terminal kinase MAPK8, regulation of histone acetylation, DNA damage checkpoint signaling, NF-kappa-B activation and cell migration. The PPP4C-PPP4R1 PP4 complex may play a role in dephosphorylation and regulation of HDAC3. The PPP4C-PPP4R2-PPP4R3A PP4 complex specifically dephosphorylates H2AX phosphorylated on Ser-140 (gamma-H2AX) generated during DNA replication and required for DNA DSB repair. Dephosphorylates NDEL1 at CDK1 phosphorylation sites and negatively regulates CDK1 activity in interphase. In response to DNA damage, catalyzes RPA2 dephosphorylation, an essential step for DNA repair since it allows the efficient RPA2-mediated recruitment of RAD51 to chromatin. This chain is Serine/threonine-protein phosphatase 4 catalytic subunit (PPP4C), found in Oryctolagus cuniculus (Rabbit).